The primary structure comprises 148 residues: Large ribosomal subunit protein bL9 (148 aa).

This sequence belongs to the bacterial ribosomal protein bL9 family.

Functionally, binds to the 23S rRNA. In Bacillus cytotoxicus (strain DSM 22905 / CIP 110041 / 391-98 / NVH 391-98), this protein is Large ribosomal subunit protein bL9.